A 400-amino-acid polypeptide reads, in one-letter code: Multidrug resistance protein MdtH (400 aa).

Over M1 to K12 the chain is Cytoplasmic. A helical membrane pass occupies residues Y13–I33. Topologically, residues S34–E98 are periplasmic. Residues P99–F116 form a helical membrane-spanning segment. The Cytoplasmic segment spans residues D117–S138. Residues L139–L159 form a helical membrane-spanning segment. At Q160–R164 the chain is on the periplasmic side. Residues L165–L185 traverse the membrane as a helical segment. Topologically, residues P186 to Y213 are cytoplasmic. Residues V214–M232 form a helical membrane-spanning segment. At V233 to S241 the chain is on the periplasmic side. Residues A242–A262 form a helical membrane-spanning segment. Topologically, residues R263–R274 are cytoplasmic. A helical transmembrane segment spans residues L275 to L295. Topologically, residues Q296–Q297 are periplasmic. Residues L298–T318 traverse the membrane as a helical segment. At L319–R337 the chain is on the cytoplasmic side. A helical transmembrane segment spans residues L338–G358. Residues K359–E365 are Periplasmic-facing. A helical membrane pass occupies residues L366 to F386. At S387–A400 the chain is on the cytoplasmic side.

It belongs to the major facilitator superfamily. DHA1 family. MdtH (TC 2.A.1.2.21) subfamily.

The protein localises to the cell inner membrane. The sequence is that of Multidrug resistance protein MdtH from Shigella boydii serotype 4 (strain Sb227).